The primary structure comprises 146 residues: SFLSAEEKGLVNGLWSKVNVDEVGGEALGRLLVVYPWTQRFFQSFGDLSSADAIMSNAKVKAHGKKVLNSFSDGLKNIDDLKGAFAKLSELHCDKLHVDPENFRLLGNVLVCVLAHHFGHEFNPQVQAAFQKVVAGVASALAHRYH.

N-acetylserine is present on serine 1. The region spanning phenylalanine 2–histidine 146 is the Globin domain. Residue lysine 17 is modified to N6-succinyllysine. Residues serine 44 and serine 50 each carry the phosphoserine modification. Residue lysine 59 is modified to N6-succinyllysine. 2 residues coordinate heme b: histidine 63 and histidine 92. Arginine 104 is modified (asymmetric dimethylarginine).

It belongs to the globin family. Heterotetramer of two alpha chains and two beta chains. As to expression, red blood cells.

Functionally, involved in oxygen transport from the lung to the various peripheral tissues. This Panthera leo (Lion) protein is Hemoglobin subunit beta-1 (HBB1).